The sequence spans 432 residues: Ribosomal protein uS12 methylthiotransferase RimO (432 aa).

Residues 4–122 (NKVDIITLGC…LISDLGKSYH (119 aa)) enclose the MTTase N-terminal domain. 6 residues coordinate [4Fe-4S] cluster: C13, C51, C85, C146, C150, and C153. In terms of domain architecture, Radical SAM core spans 132–363 (TTPRHYAYVK…MRVQEGISAD (232 aa)). The region spanning 366-432 (ASKVGQTFRV…AFDLYGKVLN (67 aa)) is the TRAM domain.

Belongs to the methylthiotransferase family. RimO subfamily. It depends on [4Fe-4S] cluster as a cofactor.

The protein localises to the cytoplasm. It carries out the reaction L-aspartate(89)-[ribosomal protein uS12]-hydrogen + (sulfur carrier)-SH + AH2 + 2 S-adenosyl-L-methionine = 3-methylsulfanyl-L-aspartate(89)-[ribosomal protein uS12]-hydrogen + (sulfur carrier)-H + 5'-deoxyadenosine + L-methionine + A + S-adenosyl-L-homocysteine + 2 H(+). Catalyzes the methylthiolation of an aspartic acid residue of ribosomal protein uS12. This chain is Ribosomal protein uS12 methylthiotransferase RimO, found in Parabacteroides distasonis (strain ATCC 8503 / DSM 20701 / CIP 104284 / JCM 5825 / NCTC 11152).